The sequence spans 589 residues: 2-succinyl-5-enolpyruvyl-6-hydroxy-3-cyclohexene-1-carboxylate synthase (589 aa).

Belongs to the TPP enzyme family. MenD subfamily. Homodimer. Mg(2+) is required as a cofactor. The cofactor is Mn(2+). It depends on thiamine diphosphate as a cofactor.

It catalyses the reaction isochorismate + 2-oxoglutarate + H(+) = 5-enolpyruvoyl-6-hydroxy-2-succinyl-cyclohex-3-ene-1-carboxylate + CO2. It functions in the pathway quinol/quinone metabolism; 1,4-dihydroxy-2-naphthoate biosynthesis; 1,4-dihydroxy-2-naphthoate from chorismate: step 2/7. It participates in quinol/quinone metabolism; menaquinone biosynthesis. Catalyzes the thiamine diphosphate-dependent decarboxylation of 2-oxoglutarate and the subsequent addition of the resulting succinic semialdehyde-thiamine pyrophosphate anion to isochorismate to yield 2-succinyl-5-enolpyruvyl-6-hydroxy-3-cyclohexene-1-carboxylate (SEPHCHC). The chain is 2-succinyl-5-enolpyruvyl-6-hydroxy-3-cyclohexene-1-carboxylate synthase from Myxococcus xanthus (strain DK1622).